Reading from the N-terminus, the 447-residue chain is N-succinylarginine dihydrolase (447 aa).

Substrate contacts are provided by residues 19–28, asparagine 110, and 137–138; these read AGLSFGNEAS and HR. Residue glutamate 174 is part of the active site. Arginine 212 is a binding site for substrate. Residue histidine 248 is part of the active site. Positions 250 and 359 each coordinate substrate. Cysteine 365 (nucleophile) is an active-site residue.

The protein belongs to the succinylarginine dihydrolase family. In terms of assembly, homodimer.

It carries out the reaction N(2)-succinyl-L-arginine + 2 H2O + 2 H(+) = N(2)-succinyl-L-ornithine + 2 NH4(+) + CO2. Its pathway is amino-acid degradation; L-arginine degradation via AST pathway; L-glutamate and succinate from L-arginine: step 2/5. Catalyzes the hydrolysis of N(2)-succinylarginine into N(2)-succinylornithine, ammonia and CO(2). The chain is N-succinylarginine dihydrolase from Salmonella typhi.